The sequence spans 424 residues: L-glutamine:2-deoxy-scyllo-inosose aminotransferase (424 aa).

Lys202 carries the N6-(pyridoxal phosphate)lysine modification.

This sequence belongs to the DegT/DnrJ/EryC1 family. L-glutamine:2-deoxy-scyllo-inosose/scyllo-inosose aminotransferase subfamily. It depends on pyridoxal 5'-phosphate as a cofactor.

The enzyme catalyses 2-deoxy-L-scyllo-inosose + L-glutamine = 2-deoxy-scyllo-inosamine + 2-oxoglutaramate. It catalyses the reaction 3-amino-2,3-dideoxy-scyllo-inosose + L-glutamine = 2-deoxystreptamine + 2-oxoglutaramate. It participates in metabolic intermediate biosynthesis; 2-deoxystreptamine biosynthesis; 2-deoxystreptamine from D-glucose 6-phosphate: step 2/4. Its pathway is metabolic intermediate biosynthesis; 2-deoxystreptamine biosynthesis; 2-deoxystreptamine from D-glucose 6-phosphate: step 4/4. The protein operates within antibiotic biosynthesis; ribostamycin biosynthesis. In terms of biological role, catalyzes the PLP-dependent transamination of 2-deoxy-scyllo-inosose (2-DOI) to form 2-deoxy-scyllo-inosamine (2-DOIA) using L-glutamine as the amino donor. Also catalyzes the transamination of 3-amino-2,3-dideoxy-scyllo-inosose (keto-2-DOIA) into 2-deoxystreptamine (2-DOS). In Streptomyces ribosidificus, this protein is L-glutamine:2-deoxy-scyllo-inosose aminotransferase (rbmB).